A 94-amino-acid chain; its full sequence is Co-chaperonin GroES (94 aa).

It belongs to the GroES chaperonin family. Heptamer of 7 subunits arranged in a ring. Interacts with the chaperonin GroEL.

It is found in the cytoplasm. In terms of biological role, together with the chaperonin GroEL, plays an essential role in assisting protein folding. The GroEL-GroES system forms a nano-cage that allows encapsulation of the non-native substrate proteins and provides a physical environment optimized to promote and accelerate protein folding. GroES binds to the apical surface of the GroEL ring, thereby capping the opening of the GroEL channel. The chain is Co-chaperonin GroES from Staphylococcus carnosus (strain TM300).